A 148-amino-acid chain; its full sequence is MSIIDNRKAYHDYFIEEKYEAGLVLEGWEVKAIRAGRANIKEAYIIVRGEEIFILGMHITPLASASTHIRTDPTRTRKLLLHGAEIARLIGKVERAGFTLVPLDLHYAKGRVKAEIGLAKGKKQYDKREDEKKRDWEREKQRLMRVKA.

This sequence belongs to the SmpB family.

Its subcellular location is the cytoplasm. Its function is as follows. Required for rescue of stalled ribosomes mediated by trans-translation. Binds to transfer-messenger RNA (tmRNA), required for stable association of tmRNA with ribosomes. tmRNA and SmpB together mimic tRNA shape, replacing the anticodon stem-loop with SmpB. tmRNA is encoded by the ssrA gene; the 2 termini fold to resemble tRNA(Ala) and it encodes a 'tag peptide', a short internal open reading frame. During trans-translation Ala-aminoacylated tmRNA acts like a tRNA, entering the A-site of stalled ribosomes, displacing the stalled mRNA. The ribosome then switches to translate the ORF on the tmRNA; the nascent peptide is terminated with the 'tag peptide' encoded by the tmRNA and targeted for degradation. The ribosome is freed to recommence translation, which seems to be the essential function of trans-translation. This chain is SsrA-binding protein, found in Azoarcus sp. (strain BH72).